The chain runs to 1083 residues: MSSEDIIYDPQFKPVQGIYENRLRQFIDTGGDYHDLNLPKFYDKKRISLDHDHVKVWWYQVSFERGSSPVSPDKRPSWKSIIERDKKGELEFREANINQPFGPSWSTTWFKVKISLPEDWVKSNEQLLFQWDCSNEGIVIDPKTLIPVTAFSGGERTEYVLPKTSDGKHFFYIEAGNNGMFGCGAGSTINPPDDNRFFHLRKADIVWPDLDARALYIDFWMLGDAARELPGDSWQKHQARQLGNAVMNLFDPNDRSSVRKCRELLQREYFDSFLESSKVYEQGESQVLTNVYGIGNCHIDTAWLWPFAETRRKIVRSWSSQCTLMDRFPEYKFVASQAQQFKWLLEDHPEFFNKVLIPKIQQSQFFAVGGTWVENDTNIPSGESLARQFFFGQRFFLKHFGLKSKIFWLPDTFGYSSQMPQLCRLSGIDKFLTQKLSWNNINSFPHSTFNWAGIDGSQLLTHMPPGNTYTADSHFGDVLRTAKQNKTPEYYGSGLMLYGKGDGGGGPTEEMLQKMRRIRSMNNRNGNVIPKLQVGITVDEFYDDILKRTNQGHDLPTWSGELYFEFHRGTYTSQAQTKKLMRLSEIKLHDLEWIAAKTSVLYPDSYKYPSKQINELWENVLLCQFHDVLPGSCIEMVYKYEAVPMLHNVVKECTSLIDKTVQFLQSQSKADLVEMRTLTWSKPEKVSEECSLNGSYTSSVTGYDDYIVLANGKLKVIICKKTGVITSITDETLGVEYLDTEHGRNKLGANQFVIYDDKPLGWQAWDTELYSVNQYKYVTKPKKVQVSCNTKEKCAVEVIFQISEKCKIKSVISLNATAVTDAKLSKVDISTTVENWDARNKFLKVEFPVNIRNDFASYETQFGITKRPTHYNTSWDVAKFEVCHHKFADYSEYSKGVSILNDCKYGFSTHGNLMRLSLLRSPKAPDAHADMGTHEIKYAIYPHRGALSSDTVKLAHEFNYCFKYKLPKDIGMNFDDIISISGDENVILSNIKRGEDDSAVKSNYSLNPRDEQSIVVRVYESLGGESFASLNTTLNLKRIEKVDNLEMKVYKSLTATRDESNHAINRIPIKLRPFEIASFRLYF.

An N-acetylserine modification is found at S2. The Zn(2+) site is built by H298, D300, D411, and H626. The active-site Nucleophile is the D411.

It belongs to the glycosyl hydrolase 38 family. As to quaternary structure, composed of isoforms with three constituent polypeptides described as [(107 kDa)-n (73 kDa)-(6-n) (31 kDa)-(6-n)], where n is 0-6. The 73 kDa and the 31 kDa polypeptides may be proteolytic derivatives of the 107 kDa polypeptide in the vacuole. Oligomerizes in the cytoplasm and retains its oligomeric form during import into the vacuole. It depends on Zn(2+) as a cofactor. Post-translationally, the N-terminus is blocked.

The protein localises to the vacuole. The catalysed reaction is Hydrolysis of terminal, non-reducing alpha-D-mannose residues in alpha-D-mannosides.. Its function is as follows. Degrades free oligosaccharides in the vacuole. In Saccharomyces cerevisiae (strain ATCC 204508 / S288c) (Baker's yeast), this protein is Alpha-mannosidase (AMS1).